The primary structure comprises 247 residues: Small ribosomal subunit protein uS3 (247 aa).

Residues 39–111 (IYDFFDKKVR…NISIQVIELK (73 aa)) form the KH type-2 domain. A disordered region spans residues 221–247 (EEMDLLNAPKDRRVRRGGERHASTKKN). The span at 236-247 (RGGERHASTKKN) shows a compositional bias: basic and acidic residues.

It belongs to the universal ribosomal protein uS3 family. As to quaternary structure, part of the 30S ribosomal subunit. Forms a tight complex with proteins S10 and S14.

In terms of biological role, binds the lower part of the 30S subunit head. Binds mRNA in the 70S ribosome, positioning it for translation. In Metamycoplasma arthritidis (strain 158L3-1) (Mycoplasma arthritidis), this protein is Small ribosomal subunit protein uS3.